A 305-amino-acid chain; its full sequence is UDP-3-O-acyl-N-acetylglucosamine deacetylase (305 aa).

Residues histidine 78, histidine 237, and aspartate 241 each contribute to the Zn(2+) site. The active-site Proton donor is histidine 264.

Belongs to the LpxC family. Zn(2+) is required as a cofactor.

It catalyses the reaction a UDP-3-O-[(3R)-3-hydroxyacyl]-N-acetyl-alpha-D-glucosamine + H2O = a UDP-3-O-[(3R)-3-hydroxyacyl]-alpha-D-glucosamine + acetate. It functions in the pathway glycolipid biosynthesis; lipid IV(A) biosynthesis; lipid IV(A) from (3R)-3-hydroxytetradecanoyl-[acyl-carrier-protein] and UDP-N-acetyl-alpha-D-glucosamine: step 2/6. In terms of biological role, catalyzes the hydrolysis of UDP-3-O-myristoyl-N-acetylglucosamine to form UDP-3-O-myristoylglucosamine and acetate, the committed step in lipid A biosynthesis. The protein is UDP-3-O-acyl-N-acetylglucosamine deacetylase of Dechloromonas aromatica (strain RCB).